The sequence spans 310 residues: tRNA uridine(34) hydroxylase (310 aa).

Positions 127–225 constitute a Rhodanese domain; the sequence is KDKNTIVVDT…YLEDMSKEES (99 aa). Residue cysteine 185 is the Cysteine persulfide intermediate of the active site.

It belongs to the TrhO family.

The catalysed reaction is uridine(34) in tRNA + AH2 + O2 = 5-hydroxyuridine(34) in tRNA + A + H2O. In terms of biological role, catalyzes oxygen-dependent 5-hydroxyuridine (ho5U) modification at position 34 in tRNAs. This is tRNA uridine(34) hydroxylase from Prochlorococcus marinus subsp. pastoris (strain CCMP1986 / NIES-2087 / MED4).